The sequence spans 184 residues: Adenine phosphoribosyltransferase 2 (184 aa).

The protein belongs to the purine/pyrimidine phosphoribosyltransferase family. As to quaternary structure, homodimer.

It localises to the cytoplasm. The enzyme catalyses AMP + diphosphate = 5-phospho-alpha-D-ribose 1-diphosphate + adenine. The protein operates within purine metabolism; AMP biosynthesis via salvage pathway; AMP from adenine: step 1/1. Its function is as follows. Catalyzes a salvage reaction resulting in the formation of AMP, that is energically less costly than de novo synthesis. The protein is Adenine phosphoribosyltransferase 2 of Rhizobium etli (strain ATCC 51251 / DSM 11541 / JCM 21823 / NBRC 15573 / CFN 42).